The following is a 505-amino-acid chain: Deoxyguanosinetriphosphate triphosphohydrolase (505 aa).

Residues 66–273 (RLTHSMEVQQ…MEAADDISYC (208 aa)) form the HD domain.

Belongs to the dGTPase family. Type 1 subfamily. Homotetramer. It depends on Mg(2+) as a cofactor.

It carries out the reaction dGTP + H2O = 2'-deoxyguanosine + triphosphate + H(+). In terms of biological role, dGTPase preferentially hydrolyzes dGTP over the other canonical NTPs. The protein is Deoxyguanosinetriphosphate triphosphohydrolase of Serratia proteamaculans (strain 568).